The chain runs to 300 residues: UDP-N-acetylenolpyruvoylglucosamine reductase (300 aa).

Residues 30-194 (KVGGAADFFV…VGATFRLDPA (165 aa)) enclose the FAD-binding PCMH-type domain. Arg-174 is a catalytic residue. Ser-223 functions as the Proton donor in the catalytic mechanism. Glu-293 is a catalytic residue.

Belongs to the MurB family. Requires FAD as cofactor.

It localises to the cytoplasm. The enzyme catalyses UDP-N-acetyl-alpha-D-muramate + NADP(+) = UDP-N-acetyl-3-O-(1-carboxyvinyl)-alpha-D-glucosamine + NADPH + H(+). The protein operates within cell wall biogenesis; peptidoglycan biosynthesis. Cell wall formation. This is UDP-N-acetylenolpyruvoylglucosamine reductase from Geobacter metallireducens (strain ATCC 53774 / DSM 7210 / GS-15).